Reading from the N-terminus, the 331-residue chain is Anthranilate phosphoribosyltransferase (331 aa).

5-phospho-alpha-D-ribose 1-diphosphate is bound by residues Gly79, 82 to 83 (GD), Ser87, 89 to 92 (NIST), 107 to 115 (KHCNTSISS), and Ser119. Position 79 (Gly79) interacts with anthranilate. Residue Ser91 coordinates Mg(2+). Asn110 provides a ligand contact to anthranilate. Residue Arg165 participates in anthranilate binding. 2 residues coordinate Mg(2+): Asp223 and Glu224.

Belongs to the anthranilate phosphoribosyltransferase family. As to quaternary structure, homodimer. Mg(2+) serves as cofactor.

It carries out the reaction N-(5-phospho-beta-D-ribosyl)anthranilate + diphosphate = 5-phospho-alpha-D-ribose 1-diphosphate + anthranilate. The protein operates within amino-acid biosynthesis; L-tryptophan biosynthesis; L-tryptophan from chorismate: step 2/5. In terms of biological role, catalyzes the transfer of the phosphoribosyl group of 5-phosphorylribose-1-pyrophosphate (PRPP) to anthranilate to yield N-(5'-phosphoribosyl)-anthranilate (PRA). The chain is Anthranilate phosphoribosyltransferase from Buchnera aphidicola subsp. Schlechtendalia chinensis.